A 259-amino-acid chain; its full sequence is GDP-perosamine N-formyltransferase (259 aa).

Residues 89-91 (SLI) and 139-143 (DENFD) contribute to the (6S)-5,6,7,8-tetrahydrofolate site.

It belongs to the Fmt family. Homodimer.

It catalyses the reaction GDP-alpha-D-perosamine + (6R)-10-formyltetrahydrofolate = GDP-N-formyl-alpha-D-perosamine + (6S)-5,6,7,8-tetrahydrofolate + H(+). The protein operates within bacterial outer membrane biogenesis; lipopolysaccharide biosynthesis. Involved in the lipopolysaccharide (LPS) O-antigen biosynthesis. Catalyzes the transfer of a formyl group to GDP-perosamine, leading to the formation of GDP-N-formylperosamine. Is critical for full bacterial virulence. The chain is GDP-perosamine N-formyltransferase from Brucella abortus (strain 2308).